The sequence spans 99 residues: Acylphosphatase (99 aa).

The Acylphosphatase-like domain maps to 5–97 (ILQVMIRGRV…RAGEKFSVLP (93 aa)). Residues R20 and N38 contribute to the active site.

The protein belongs to the acylphosphatase family.

The catalysed reaction is an acyl phosphate + H2O = a carboxylate + phosphate + H(+). This is Acylphosphatase (acyP) from Bradyrhizobium diazoefficiens (strain JCM 10833 / BCRC 13528 / IAM 13628 / NBRC 14792 / USDA 110).